The primary structure comprises 158 residues: Placenta growth factor (158 aa).

The N-terminal stretch at 1–18 is a signal peptide; sequence MLVMKLFTCFLQVLAGLA. Residues Asn29 and Asn30 are each glycosylated (N-linked (GlcNAc...) asparagine). 3 disulfide bridges follow: Cys48–Cys90, Cys79–Cys125, and Cys83–Cys127. An N-linked (GlcNAc...) asparagine glycan is attached at Asn97. A disordered region spans residues 136–158; it reads AERRKTKGKRKRSRNSQTEEPHP. Residues 137 to 149 are compositionally biased toward basic residues; the sequence is ERRKTKGKRKRSR.

It belongs to the PDGF/VEGF growth factor family. In terms of assembly, antiparallel homodimer; disulfide-linked. Also found as heterodimer with VEGFA/VEGF.

The protein resides in the secreted. Growth factor active in angiogenesis and endothelial cell growth, stimulating their proliferation and migration. It binds to the receptor FLT1/VEGFR-1. Also promotes cell tumor growth. This Mus musculus (Mouse) protein is Placenta growth factor (Pgf).